A 510-amino-acid chain; its full sequence is Peroxidase 2 (510 aa).

Positions 1-19 (MRLTYLPLFAGIAIQSASA) are cleaved as a signal peptide. Positions 20 to 58 (LPDFFKSSVLKPRRTNSLLINPDAQPDLPTAQQASTAAA) are excised as a propeptide. Residue D228 is the Proton acceptor of the active site. H362 is a heme binding site.

As to quaternary structure, homodimer. The cofactor is heme b.

In terms of biological role, peroxidase capable of degrading beta-carotene. This Mycetinis scorodonius (Garlic mushroom) protein is Peroxidase 2.